We begin with the raw amino-acid sequence, 160 residues long: Troponin C, skeletal muscle (160 aa).

N-acetylthreonine is present on T2. EF-hand domains are found at residues 15–50, 51–86, 91–126, and 127–160; these read EMIA…LGQT, PTKE…QMKE, KSEE…SGEH, and VTDE…EGVQ. Ca(2+) contacts are provided by D28, D30, D34, E39, D64, D66, S68, T70, E75, D104, N106, D108, Y110, E115, D140, N142, D144, R146, and E151.

This sequence belongs to the troponin C family.

Troponin is the central regulatory protein of striated muscle contraction. Tn consists of three components: Tn-I which is the inhibitor of actomyosin ATPase, Tn-T which contains the binding site for tropomyosin and Tn-C. The binding of calcium to Tn-C abolishes the inhibitory action of Tn on actin filaments. This is Troponin C, skeletal muscle (TNNC2) from Homo sapiens (Human).